A 159-amino-acid polypeptide reads, in one-letter code: MRTNCIYPGTFDPITNGHLDVIKRALRIFDNVIVAVAKSDNKKPFFELDKRVEMVKEATKSLENIEVIAFENLLVDFAKSQDTCFVIRGLRAVSDFEYELQLGYANRSLWDKFETIYLMPTIKYSFISSSIVRSIFEHGGDISHLVPKEILPFLEDKKC.

T10 contributes to the substrate binding site. ATP-binding positions include 10–11 (TF) and H18. Positions 42, 74, and 88 each coordinate substrate. ATP-binding positions include 89-91 (GLR), E99, and 124-130 (YSFISSS).

The protein belongs to the bacterial CoaD family. As to quaternary structure, homohexamer. Requires Mg(2+) as cofactor.

The protein localises to the cytoplasm. The catalysed reaction is (R)-4'-phosphopantetheine + ATP + H(+) = 3'-dephospho-CoA + diphosphate. The protein operates within cofactor biosynthesis; coenzyme A biosynthesis; CoA from (R)-pantothenate: step 4/5. Its function is as follows. Reversibly transfers an adenylyl group from ATP to 4'-phosphopantetheine, yielding dephospho-CoA (dPCoA) and pyrophosphate. This Campylobacter hominis (strain ATCC BAA-381 / DSM 21671 / CCUG 45161 / LMG 19568 / NCTC 13146 / CH001A) protein is Phosphopantetheine adenylyltransferase.